The following is a 392-amino-acid chain: Zinc transporter zipt-7.1 (392 aa).

An N-linked (GlcNAc...) asparagine glycan is attached at N63. The next 2 helical transmembrane spans lie at V82–I102 and I114–H134. Residues H139–D162 form a disordered region. The segment covering G142–D162 has biased composition (basic and acidic residues). A helical membrane pass occupies residues G170–I190. An N-linked (GlcNAc...) asparagine glycan is attached at N248. 3 consecutive transmembrane segments (helical) span residues I255–L275, V304–L324, and G331–P351. Residue N361 is glycosylated (N-linked (GlcNAc...) asparagine). A helical membrane pass occupies residues S371–V391.

It belongs to the ZIP transporter (TC 2.A.5) family. KE4/Catsup subfamily.

The protein localises to the membrane. Functionally, zinc transporter which regulates intracellular zinc levels. Required for spermatogenesis in both hermaphrodites and males where it resides in an inactive form in immature sperm, spermatids, but is likely activated in response to reduced spe-4 and spe-6 function. Upon activation, mediates the release of zinc from internal stores in spermatids into the cytoplasm. The resulting increase in cytoplasmic zinc levels promotes spermatid activation and subsequent differentiation into mature motile sperm that are capable of fertilization. In Caenorhabditis briggsae, this protein is Zinc transporter zipt-7.1.